We begin with the raw amino-acid sequence, 181 residues long: Small ribosomal subunit protein uS4 (181 aa).

Residues 108–172 (RRLQTQVYRR…SPLVSDIHSE (65 aa)) enclose the S4 RNA-binding domain.

Belongs to the universal ribosomal protein uS4 family. Part of the 30S ribosomal subunit. Contacts protein S5. The interaction surface between S4 and S5 is involved in control of translational fidelity.

One of the primary rRNA binding proteins, it binds directly to 16S rRNA where it nucleates assembly of the body of the 30S subunit. Its function is as follows. With S5 and S12 plays an important role in translational accuracy. The sequence is that of Small ribosomal subunit protein uS4 from Methanospirillum hungatei JF-1 (strain ATCC 27890 / DSM 864 / NBRC 100397 / JF-1).